Here is a 51-residue protein sequence, read N- to C-terminus: Large ribosomal subunit protein eL39 (51 aa).

It belongs to the eukaryotic ribosomal protein eL39 family.

The sequence is that of Large ribosomal subunit protein eL39 from Methanococcoides burtonii (strain DSM 6242 / NBRC 107633 / OCM 468 / ACE-M).